Reading from the N-terminus, the 321-residue chain is Ubiquitin-conjugating enzyme E2 U (321 aa).

The UBC core domain occupies 4-153 (RAYLLLHRDF…LRLFNRPLQM (150 aa)). The Glycyl thioester intermediate role is filled by C89. Residues 285–321 (WKSDTSLYENDTDEPREEEVEDLISWTNTLNTNTSED) form a disordered region. Over residues 294-306 (NDTDEPREEEVED) the composition is skewed to acidic residues. Residues 309-321 (SWTNTLNTNTSED) show a composition bias toward polar residues.

Belongs to the ubiquitin-conjugating enzyme family. Post-translationally, autoubiquitinated in vitro in the presence of UBR5.

It carries out the reaction S-ubiquitinyl-[E1 ubiquitin-activating enzyme]-L-cysteine + [E2 ubiquitin-conjugating enzyme]-L-cysteine = [E1 ubiquitin-activating enzyme]-L-cysteine + S-ubiquitinyl-[E2 ubiquitin-conjugating enzyme]-L-cysteine.. It functions in the pathway protein modification; protein ubiquitination. Functionally, catalyzes the covalent attachment of ubiquitin to other proteins. In Homo sapiens (Human), this protein is Ubiquitin-conjugating enzyme E2 U (UBE2U).